Here is a 272-residue protein sequence, read N- to C-terminus: Insulin-like growth factor-binding protein 5 (272 aa).

The N-terminal stretch at 1-20 (MVLLTAVLLLLAAYAGPAQS) is a signal peptide. The IGFBP N-terminal domain maps to 23-103 (SFVHCEPCDE…LHGRGVCLNE (81 aa)). Cystine bridges form between Cys27–Cys53, Cys30–Cys55, Cys38–Cys56, Cys45–Cys59, Cys67–Cys80, and Cys74–Cys100. Positions 111-122 (KIERDSREHEEP) are enriched in basic and acidic residues. The interval 111–130 (KIERDSREHEEPTTSEMAEE) is disordered. Ser116 carries the phosphoserine; by FAM20C modification. An O-linked (HexNAc...) threonine glycan is attached at Thr172. The 75-residue stretch at 189 to 263 (QGPCRRHMEA…MEYVDGDFQC (75 aa)) folds into the Thyroglobulin type-1 domain. Cystine bridges form between Cys192–Cys219, Cys230–Cys241, and Cys243–Cys263.

Interacts with IGF1; this interaction enhances the growth stimulatory effects of IGF1 on fibroblasts. Interacts with CAV1; this interaction allows trafficking of IGFBP5 from the plasma membrane to the nucleus. Interacts with NCL; this interaction is necessary for IGFBP5 localization to the nucleus. Cleaved by C1S in extracellular space. In terms of tissue distribution, osteosarcoma, and at lower levels in liver, kidney and brain.

It is found in the secreted. The protein localises to the cytoplasm. The protein resides in the nucleus. Functionally, multifunctional protein that plays a critical role in regulating the availability of IGFs to their receptors and thereby regulates IGF-mediated cellular processes including proliferation, differentiation, and apoptosis in a cell-type specific manner. Increases the cell proliferation of osteoblasts, intestinal smooth muscle cells and neuroblastoma cells. Enhances adhesion and survival of epithelial cells but decreases adhesion of mesenchymal cells. Once secreted, acts as a major mediator of mTORC1-dependent feedback inhibition of IGF1 signaling. Also plays a role in the induction of extracellular matrix (ECM) production and deposition independently of its nuclear translocation and binding to IGFs. Acts itself as a growth factor that can act independently of IGFs to regulate bone formation. Acts as a ligand for the ROR1 receptor which triggers formation of ROR1/HER2 heterodimer to enhance CREB oncogenic signaling. The sequence is that of Insulin-like growth factor-binding protein 5 (IGFBP5) from Homo sapiens (Human).